Reading from the N-terminus, the 175-residue chain is uncharacterized protein (175 aa).

Residues 1–2 are Extracellular-facing; that stretch reads ME. A helical transmembrane segment spans residues 3–23; that stretch reads SIILSIAIFIGVLLGTSVGAG. The Cytoplasmic portion of the chain corresponds to 24–151; that stretch reads SGSSISPDVD…TGISTTMNAR (128 aa). A disordered region spans residues 26–88; that stretch reads SSISPDVDAG…DVGAGSGSSI (63 aa). The segment covering 59 to 78 has biased composition (polar residues); that stretch reads FSGSSTSPDVDAGSGSSTSP. The chain crosses the membrane as a helical span at residues 152–172; sequence VAVLITAAILSAPVTAIALLE. Over 173–175 the chain is Extracellular; it reads ARR.

Its subcellular location is the membrane. This is an uncharacterized protein from Saccharomyces cerevisiae (strain ATCC 204508 / S288c) (Baker's yeast).